We begin with the raw amino-acid sequence, 486 residues long: UDP-N-acetylmuramate--L-alanine ligase (486 aa).

ATP is bound at residue 123 to 129 (GTHGKTT).

The protein belongs to the MurCDEF family.

The protein resides in the cytoplasm. The catalysed reaction is UDP-N-acetyl-alpha-D-muramate + L-alanine + ATP = UDP-N-acetyl-alpha-D-muramoyl-L-alanine + ADP + phosphate + H(+). It participates in cell wall biogenesis; peptidoglycan biosynthesis. In terms of biological role, cell wall formation. This is UDP-N-acetylmuramate--L-alanine ligase from Pseudomonas fluorescens (strain Pf0-1).